We begin with the raw amino-acid sequence, 437 residues long: Succinyl-CoA:cyclohexane-1-carboxylate CoA transferase (437 aa).

221 to 225 (GWGGI) is a binding site for CoA. Glu244 (5-glutamyl coenzyme A thioester intermediate) is an active-site residue. CoA-binding residues include Leu319, Gly342, and Lys367.

The protein belongs to the acetyl-CoA hydrolase/transferase family. In terms of assembly, homodimer.

It catalyses the reaction cyclohexane-1-carboxylate + succinyl-CoA = cyclohexane-1-carbonyl-CoA + succinate. It carries out the reaction cyclohexane-1-carboxylate + butanoyl-CoA = cyclohexane-1-carbonyl-CoA + butanoate. In terms of biological role, acyl-CoA transferase involved in the anaerobic degradation of cyclohexane carboxylic acid (CHC). Catalyzes the activation of CHC to cyclohexane-1-carbonyl-CoA (CHCoA). Benzoic acid and cyclohex-1-ene-1-carboxylic acid can also be used as substrates, but with lower specific activity. Shows highest activity with succinyl-CoA and butanoyl-coA as a CoA donor, and lower activity with crotonyl-CoA, acetyl-CoA, glutaryl-CoA, CH1eneCoA, propionyl-CoA and acetoacetyl-CoA. In vitro, the enzyme can use butanoyl-coA as a CoA donor with greater efficiency than succinyl-CoA. However, succinyl-CoA is the most abundant CoA ester in exponentially grown cells, whereas butanoyl-coA is hardly detectable, indicating that succinyl-CoA is the natural CoA donor for CHC activation. This chain is Succinyl-CoA:cyclohexane-1-carboxylate CoA transferase, found in Geobacter metallireducens (strain ATCC 53774 / DSM 7210 / GS-15).